The primary structure comprises 682 residues: Connectin (682 aa).

The N-terminal stretch at 1 to 24 (MATLADSAICFLLLSLLLIGACLV) is a signal peptide. Residues 29–54 (GRAKDDRRTRGRGSSSGVLSSSSSSS) form a disordered region. Over residues 40–54 (RGSSSGVLSSSSSSS) the composition is skewed to low complexity. LRR repeat units lie at residues 149–172 (LREL…IIEP), 173–196 (LKNL…AFAN), 199–220 (FLER…AFAN), 223–244 (RLRE…AFRN), 247–268 (LCER…LFAD), 271–292 (RLTF…IFRG), 295–316 (NLNV…VFAE), 319–342 (SLSE…DGLN), 343–364 (TLKT…LLRG), 367–388 (ALLS…TFQP), and 389–404 (IMDN…LVSD). The LRRCT domain occupies 405–462 (NKFICDCRLQWIFELKNRTRHLQLRDSLEDLHCTLQEPKLSHFVDPVPPTILDVLNIG). A disordered region spans residues 503–536 (RQALRGQRQFASSAENVVESKMRRRRKRQEEVKE). A658 is lipidated: GPI-anchor amidated alanine. The propeptide at 659-682 (GANSLAQGMTIIVSLVALMMISRG) is removed in mature form.

In terms of tissue distribution, predominantly expressed in abdominal and thoracic segment muscle and motorneuron cells.

It is found in the cell membrane. Its function is as follows. Cell adhesion protein involved in target recognition during neuromuscular development. Mediates homophilic cellular adhesion. The sequence is that of Connectin (Con) from Drosophila melanogaster (Fruit fly).